Reading from the N-terminus, the 296-residue chain is uncharacterized protein (296 aa).

The 60-residue stretch at 1 to 60 (MDPKISYFQTFIVASKTKSFSKAAKRLGITQGTVSNHISALEKYFDAQLFLRTPEGVDLT) folds into the HTH lysR-type domain. Residues 20–39 (FSKAAKRLGITQGTVSNHIS) constitute a DNA-binding region (H-T-H motif).

This sequence belongs to the LysR transcriptional regulatory family.

This is an uncharacterized protein from Methanocaldococcus jannaschii (strain ATCC 43067 / DSM 2661 / JAL-1 / JCM 10045 / NBRC 100440) (Methanococcus jannaschii).